The primary structure comprises 555 residues: Glucose-6-phosphate isomerase (555 aa).

Glu-356 (proton donor) is an active-site residue. Active-site residues include His-387 and Lys-515.

This sequence belongs to the GPI family.

The protein resides in the cytoplasm. The catalysed reaction is alpha-D-glucose 6-phosphate = beta-D-fructose 6-phosphate. The protein operates within carbohydrate biosynthesis; gluconeogenesis. Its pathway is carbohydrate degradation; glycolysis; D-glyceraldehyde 3-phosphate and glycerone phosphate from D-glucose: step 2/4. Functionally, catalyzes the reversible isomerization of glucose-6-phosphate to fructose-6-phosphate. In Desulforapulum autotrophicum (strain ATCC 43914 / DSM 3382 / VKM B-1955 / HRM2) (Desulfobacterium autotrophicum), this protein is Glucose-6-phosphate isomerase.